The following is a 189-amino-acid chain: UPF0149 protein VFMJ11_2207 (189 aa).

It belongs to the UPF0149 family.

This chain is UPF0149 protein VFMJ11_2207, found in Aliivibrio fischeri (strain MJ11) (Vibrio fischeri).